Consider the following 881-residue polypeptide: Valine--tRNA ligase (881 aa).

The 'HIGH' region motif lies at 76 to 86; it reads PTVSGSLHIGH. The interval 493 to 526 is disordered; the sequence is DSPILPDESQLPVDPSSQAPEGYTEDQRGKPGGF. Positions 608–612 match the 'KMSKS' region motif; the sequence is KMSKS. Lysine 611 contributes to the ATP binding site.

This sequence belongs to the class-I aminoacyl-tRNA synthetase family. ValS type 2 subfamily. Monomer.

Its subcellular location is the cytoplasm. The catalysed reaction is tRNA(Val) + L-valine + ATP = L-valyl-tRNA(Val) + AMP + diphosphate. Functionally, catalyzes the attachment of valine to tRNA(Val). As ValRS can inadvertently accommodate and process structurally similar amino acids such as threonine, to avoid such errors, it has a 'posttransfer' editing activity that hydrolyzes mischarged Thr-tRNA(Val) in a tRNA-dependent manner. The polypeptide is Valine--tRNA ligase (Thermobifida fusca (strain YX)).